A 187-amino-acid polypeptide reads, in one-letter code: Elongation factor P (187 aa).

The protein belongs to the elongation factor P family.

The protein resides in the cytoplasm. The protein operates within protein biosynthesis; polypeptide chain elongation. Functionally, involved in peptide bond synthesis. Stimulates efficient translation and peptide-bond synthesis on native or reconstituted 70S ribosomes in vitro. Probably functions indirectly by altering the affinity of the ribosome for aminoacyl-tRNA, thus increasing their reactivity as acceptors for peptidyl transferase. The polypeptide is Elongation factor P (Synechococcus sp. (strain WH7803)).